A 703-amino-acid polypeptide reads, in one-letter code: Protein FAR1-RELATED SEQUENCE 6 (703 aa).

The tract at residues 1 to 29 (MERSESVDEDVQASAYLENDEVRERDDPM) is disordered. One can recognise an FAR1 domain in the interval 99–184 (NYYNCYASEV…TLDHNHLLGC (86 aa)). Positions 297–392 (VIFIDSSYIS…SLTHIMRKIP (96 aa)) constitute an MULE domain. The SWIM-type zinc finger occupies 584–620 (FEVLYNRSVGEVRCICSCFNFYGYLCRHALCVLNFNG).

The protein belongs to the FHY3/FAR1 family. Expressed in hypocotyls, rosette and cauline leaves, inflorescences stems, flowers and siliques.

It localises to the nucleus. Functionally, putative transcription activator involved in regulating light control of development. May have a role in controlling flowering time. This is Protein FAR1-RELATED SEQUENCE 6 (FRS6) from Arabidopsis thaliana (Mouse-ear cress).